Here is a 107-residue protein sequence, read N- to C-terminus: MNKKELFDAFDGFSQNLMVTLAEIEAMKKQVQSLVEENTILRLENTKLRERLSHLEHETVAKNPSKQRKDHLEGIYDEGFHICNFFYGQRRENDEECMFCRELLDRK.

Zn(2+) is bound by residues histidine 81, cysteine 83, cysteine 97, and cysteine 100.

The protein belongs to the YabA family. Homotetramer. Interacts with both DnaA and DnaN, acting as a bridge between these two proteins. The cofactor is Zn(2+).

The protein localises to the cytoplasm. It localises to the nucleoid. In terms of biological role, involved in control of chromosome replication initiation. Inhibits the cooperative binding of DnaA to the oriC region, thus negatively regulating initiation of chromosome replication. Inhibits the ability of DnaA-ATP to form a helix on DNA; does not disassemble preformed DnaA-DNA helices. Decreases the residence time of DnaA on the chromosome at its binding sites (oriC, replication forks and promoter-binding sites). Tethers DnaA to the replication machinery via the DNA polymerase beta sliding clamp subunit (dnaN). Associates with oriC and other DnaA targets on the chromosome in a DnaA-dependent manner. This chain is Replication initiation control protein YabA, found in Streptococcus pyogenes serotype M1.